The chain runs to 263 residues: MFDIGVNLTSSQFVKDHDEVVARAYAAGVNGLLLTGTNLYESQQAQRLAQHYPHCWSTAGVHPHDSSEWRADTGEAIVALAALPEVVAIGECGLDFNRNFSTPQAQEHAFEAQLRIAAELQMPVFMHCRDAHTRFLALLDPWLDKLPGAVLHCFTGTRQEMQECLERGLYIGITGWVCDERRGLALRELLPLIPTEKLLIETDAPYLLPRDLSPKPASRRNEPAYLPHILQRIAHWRGEDPQQLAAATDANAEKLFGITLKSA.

Residues E91, H127, and H152 each contribute to the a divalent metal cation site.

It belongs to the metallo-dependent hydrolases superfamily. TatD-type hydrolase family. TatD subfamily. Monomer. Requires Mg(2+) as cofactor.

The protein localises to the cytoplasm. Functionally, 3'-5' exonuclease that prefers single-stranded DNA and RNA. May play a role in the H(2)O(2)-induced DNA damage repair. This Citrobacter rodentium (strain ICC168) (Citrobacter freundii biotype 4280) protein is 3'-5' ssDNA/RNA exonuclease TatD.